A 392-amino-acid chain; its full sequence is Formate-dependent phosphoribosylglycinamide formyltransferase (392 aa).

N(1)-(5-phospho-beta-D-ribosyl)glycinamide is bound by residues 15 to 16 (EL) and Glu75. ATP contacts are provided by residues Arg107, Lys148, 153 to 158 (SSGKGQ), 188 to 191 (EEFL), and Glu196. The ATP-grasp domain maps to 112–302 (DLASGELGLH…EFELHLRAVL (191 aa)). Mg(2+) is bound by residues Glu261 and Glu273. N(1)-(5-phospho-beta-D-ribosyl)glycinamide is bound by residues Asp280, Lys350, and 357 to 358 (RR).

The protein belongs to the PurK/PurT family. In terms of assembly, homodimer.

It carries out the reaction N(1)-(5-phospho-beta-D-ribosyl)glycinamide + formate + ATP = N(2)-formyl-N(1)-(5-phospho-beta-D-ribosyl)glycinamide + ADP + phosphate + H(+). It participates in purine metabolism; IMP biosynthesis via de novo pathway; N(2)-formyl-N(1)-(5-phospho-D-ribosyl)glycinamide from N(1)-(5-phospho-D-ribosyl)glycinamide (formate route): step 1/1. Functionally, involved in the de novo purine biosynthesis. Catalyzes the transfer of formate to 5-phospho-ribosyl-glycinamide (GAR), producing 5-phospho-ribosyl-N-formylglycinamide (FGAR). Formate is provided by PurU via hydrolysis of 10-formyl-tetrahydrofolate. This is Formate-dependent phosphoribosylglycinamide formyltransferase from Synechococcus sp. (strain CC9902).